A 559-amino-acid chain; its full sequence is DNA ligase (559 aa).

E247 contacts ATP. K249 functions as the N6-AMP-lysine intermediate in the catalytic mechanism. ATP-binding residues include R254, R269, E299, F339, R414, and K420.

It belongs to the ATP-dependent DNA ligase family. The cofactor is Mg(2+).

The catalysed reaction is ATP + (deoxyribonucleotide)n-3'-hydroxyl + 5'-phospho-(deoxyribonucleotide)m = (deoxyribonucleotide)n+m + AMP + diphosphate.. The enzyme catalyses NAD(+) + (deoxyribonucleotide)n-3'-hydroxyl + 5'-phospho-(deoxyribonucleotide)m = (deoxyribonucleotide)n+m + AMP + beta-nicotinamide D-nucleotide.. In terms of biological role, DNA ligase that seals nicks in double-stranded DNA during DNA replication, DNA recombination and DNA repair. Shows high activity with either ATP or NAD(+). The polypeptide is DNA ligase (Thermococcus fumicolans).